A 201-amino-acid polypeptide reads, in one-letter code: Nucleoside triphosphate pyrophosphatase (201 aa).

Aspartate 77 serves as the catalytic Proton acceptor.

This sequence belongs to the Maf family. A divalent metal cation serves as cofactor.

Its subcellular location is the cytoplasm. The enzyme catalyses a ribonucleoside 5'-triphosphate + H2O = a ribonucleoside 5'-phosphate + diphosphate + H(+). The catalysed reaction is a 2'-deoxyribonucleoside 5'-triphosphate + H2O = a 2'-deoxyribonucleoside 5'-phosphate + diphosphate + H(+). Functionally, nucleoside triphosphate pyrophosphatase. May have a dual role in cell division arrest and in preventing the incorporation of modified nucleotides into cellular nucleic acids. The chain is Nucleoside triphosphate pyrophosphatase from Rickettsia akari (strain Hartford).